We begin with the raw amino-acid sequence, 276 residues long: Bis(5'-nucleosyl)-tetraphosphatase, symmetrical (276 aa).

It belongs to the Ap4A hydrolase family.

The catalysed reaction is P(1),P(4)-bis(5'-adenosyl) tetraphosphate + H2O = 2 ADP + 2 H(+). Hydrolyzes diadenosine 5',5'''-P1,P4-tetraphosphate to yield ADP. This chain is Bis(5'-nucleosyl)-tetraphosphatase, symmetrical, found in Legionella pneumophila (strain Lens).